The following is a 302-amino-acid chain: Sulfate adenylyltransferase subunit 2 (302 aa).

This sequence belongs to the PAPS reductase family. CysD subfamily. In terms of assembly, heterodimer composed of CysD, the smaller subunit, and CysN.

The enzyme catalyses sulfate + ATP + H(+) = adenosine 5'-phosphosulfate + diphosphate. It participates in sulfur metabolism; hydrogen sulfide biosynthesis; sulfite from sulfate: step 1/3. Functionally, with CysN forms the ATP sulfurylase (ATPS) that catalyzes the adenylation of sulfate producing adenosine 5'-phosphosulfate (APS) and diphosphate, the first enzymatic step in sulfur assimilation pathway. APS synthesis involves the formation of a high-energy phosphoric-sulfuric acid anhydride bond driven by GTP hydrolysis by CysN coupled to ATP hydrolysis by CysD. This chain is Sulfate adenylyltransferase subunit 2, found in Shewanella halifaxensis (strain HAW-EB4).